We begin with the raw amino-acid sequence, 141 residues long: Nucleoside diphosphate kinase (141 aa).

ATP-binding residues include Lys-11, Phe-59, Arg-87, Thr-93, Arg-104, and Asn-114. The active-site Pros-phosphohistidine intermediate is His-117.

Belongs to the NDK family. In terms of assembly, homotetramer. The cofactor is Mg(2+).

It is found in the cytoplasm. It catalyses the reaction a 2'-deoxyribonucleoside 5'-diphosphate + ATP = a 2'-deoxyribonucleoside 5'-triphosphate + ADP. The catalysed reaction is a ribonucleoside 5'-diphosphate + ATP = a ribonucleoside 5'-triphosphate + ADP. Functionally, major role in the synthesis of nucleoside triphosphates other than ATP. The ATP gamma phosphate is transferred to the NDP beta phosphate via a ping-pong mechanism, using a phosphorylated active-site intermediate. The polypeptide is Nucleoside diphosphate kinase (Pseudomonas putida (strain W619)).